The sequence spans 951 residues: Cadmium/zinc-transporting ATPase HMA2 (951 aa).

Topologically, residues 1 to 83 (MASKKMTKSY…VRVTGETNFK (83 aa)) are cytoplasmic. The region spanning 7–73 (TKSYFDVLGI…ALNQAQLEAN (67 aa)) is the HMA domain. A helical membrane pass occupies residues 84 to 105 (NKWPSPFAVVSGILLLLSFFKY). At 106–108 (LYS) the chain is on the extracellular side. Residues 109–128 (PFRWLAVAAVVAGIYPILAK) form a helical membrane-spanning segment. Residues 129 to 135 (AVASLAR) lie on the Cytoplasmic side of the membrane. Residues 136-156 (FRIDINILVVVTVGATIGMQD) form a helical membrane-spanning segment. Residue tyrosine 157 is a topological domain, extracellular. A helical membrane pass occupies residues 158–178 (TEAAVVVFLFTIAEWLQSRAS). Residues 179 to 304 (YKASAVMQSL…KTETQRFIDK (126 aa)) lie on the Cytoplasmic side of the membrane. A helical membrane pass occupies residues 305–327 (CSKYYTPAIILISICFVAIPFAL). The Extracellular segment spans residues 328-335 (KVHNLKHW). Residues 336–353 (VHLALVVLVSACPCGLIL) form a helical membrane-spanning segment. Topologically, residues 354-647 (STPVATFCAL…KLAKRAKRKV (294 aa)) are cytoplasmic. Residue aspartate 391 is the 4-aspartylphosphate intermediate of the active site. Positions 592 and 596 each coordinate Mg(2+). The helical transmembrane segment at 648 to 667 (VENVVISITMKGAILALAFA) threads the bilayer. The Extracellular portion of the chain corresponds to 668–671 (GHPL). The helical transmembrane segment at 672–691 (IWAAVLADVGTCLLVILNSM) threads the bilayer. Over 692–951 (LLLSDKHKTG…VGTLKEIVIE (260 aa)) the chain is Cytoplasmic. Basic and acidic residues predominate over residues 841–851 (ELQQSCHDKPS). Positions 841–866 (ELQQSCHDKPSGLDIGTGPKHEGSST) are disordered.

This sequence belongs to the cation transport ATPase (P-type) (TC 3.A.3) family. Type IB subfamily. Predominantly expressed in the vascular tissues of roots, stems, and leaves. Also detected in developing anthers.

Its subcellular location is the cell membrane. It carries out the reaction Zn(2+)(in) + ATP + H2O = Zn(2+)(out) + ADP + phosphate + H(+). The catalysed reaction is Cd(2+)(in) + ATP + H2O = Cd(2+)(out) + ADP + phosphate + H(+). Its function is as follows. Plays an important role in zinc transport and homeostasis. Could also be involved in cadmium detoxification. This chain is Cadmium/zinc-transporting ATPase HMA2 (HMA2), found in Arabidopsis thaliana (Mouse-ear cress).